The chain runs to 188 residues: Elongation factor P (188 aa).

It belongs to the elongation factor P family.

Its subcellular location is the cytoplasm. Its pathway is protein biosynthesis; polypeptide chain elongation. Involved in peptide bond synthesis. Stimulates efficient translation and peptide-bond synthesis on native or reconstituted 70S ribosomes in vitro. Probably functions indirectly by altering the affinity of the ribosome for aminoacyl-tRNA, thus increasing their reactivity as acceptors for peptidyl transferase. The protein is Elongation factor P of Gemmatimonas aurantiaca (strain DSM 14586 / JCM 11422 / NBRC 100505 / T-27).